Consider the following 142-residue polypeptide: ATP synthase epsilon chain (142 aa).

The protein belongs to the ATPase epsilon chain family. F-type ATPases have 2 components, CF(1) - the catalytic core - and CF(0) - the membrane proton channel. CF(1) has five subunits: alpha(3), beta(3), gamma(1), delta(1), epsilon(1). CF(0) has three main subunits: a, b and c.

The protein localises to the cell inner membrane. Functionally, produces ATP from ADP in the presence of a proton gradient across the membrane. The sequence is that of ATP synthase epsilon chain from Shewanella piezotolerans (strain WP3 / JCM 13877).